Here is a 635-residue protein sequence, read N- to C-terminus: 1-deoxy-D-xylulose-5-phosphate synthase (635 aa).

Residues His-79 and 120–122 (GHS) contribute to the thiamine diphosphate site. Mg(2+) is bound at residue Asp-151. Thiamine diphosphate is bound by residues 152–153 (GA), Asn-182, Tyr-291, and Glu-372. Position 182 (Asn-182) interacts with Mg(2+).

The protein belongs to the transketolase family. DXPS subfamily. As to quaternary structure, homodimer. It depends on Mg(2+) as a cofactor. The cofactor is thiamine diphosphate.

The enzyme catalyses D-glyceraldehyde 3-phosphate + pyruvate + H(+) = 1-deoxy-D-xylulose 5-phosphate + CO2. The protein operates within metabolic intermediate biosynthesis; 1-deoxy-D-xylulose 5-phosphate biosynthesis; 1-deoxy-D-xylulose 5-phosphate from D-glyceraldehyde 3-phosphate and pyruvate: step 1/1. Its function is as follows. Catalyzes the acyloin condensation reaction between C atoms 2 and 3 of pyruvate and glyceraldehyde 3-phosphate to yield 1-deoxy-D-xylulose-5-phosphate (DXP). In Xylella fastidiosa (strain M12), this protein is 1-deoxy-D-xylulose-5-phosphate synthase.